A 317-amino-acid polypeptide reads, in one-letter code: R-phycoerythrin gamma chain, chloroplastic (317 aa).

Residues Met1–Met40 constitute a chloroplast transit peptide. The phycourobilin site is built by Cys94 and Cys133. Residue Cys210 coordinates (2R,3E)-phycoerythrobilin. Cys297 is a phycourobilin binding site.

Heteromer of 1 alpha, 1 beta and 2 gamma chains. In terms of processing, contains four covalently linked bilin chromophores.

The protein resides in the plastid. The protein localises to the chloroplast thylakoid membrane. Functionally, critical for the incorporation of phycoerythrin in the phycobilisome complex. The chain is R-phycoerythrin gamma chain, chloroplastic from Aglaothamnion neglectum (Red alga).